The following is a 153-amino-acid chain: Pheromone-binding protein Gp-9 (153 aa).

The signal sequence occupies residues 1-19; that stretch reads MKTFVLHIFIFALVAFASA. Disulfide bonds link cysteine 37–cysteine 77, cysteine 73–cysteine 129, and cysteine 118–cysteine 138.

Belongs to the PBP/GOBP family. In terms of assembly, homodimer.

The protein resides in the secreted. Functionally, colony queen number, a major feature of social organization, is associated with worker genotype for Gp-9. Colonies are headed by either a single reproductive queen (monogyne form) or multiple queens (polygyne form). Differences in worker Gp-9 genotypes between social forms may cause differences in workers' abilities to recognize queens and regulate their numbers. The polypeptide is Pheromone-binding protein Gp-9 (Solenopsis interrupta (Fire ant)).